A 1172-amino-acid polypeptide reads, in one-letter code: Tudor domain-containing protein 1 (1172 aa).

Disordered stretches follow at residues 1 to 59 (MMPR…KNNF) and 72 to 136 (QEDS…KKSH). Low complexity-rich tracts occupy residues 75–86 (SSVVSSNPAVVN) and 103–117 (NPVSPLSLGNSSPPN). Over residues 118-129 (QVKTKPSSNVTP) the composition is skewed to polar residues. Cysteine 163, cysteine 166, cysteine 174, cysteine 177, cysteine 183, cysteine 187, histidine 195, and cysteine 199 together coordinate Zn(2+). The MYND-type zinc finger occupies 163 to 199 (CHRCGLFGSLRCSQCKQTYYCSTACQRRDWSSHSTIC). Tudor domains are found at residues 307 to 367 (LPVK…LDLF), 536 to 595 (YPTI…LLDL), 756 to 815 (KAEI…FLLL), and 982 to 1040 (RPRT…HLEL).

It belongs to the TDRD1 family. In terms of assembly, found in a mRNP complex, at least composed of TDRD1, TDRD6, TDRD7 and DDX4. Interacts with MAEL. Interacts with PIWIL1, PIWIL2 and PIWIL4 (when methylated on arginine residues). Interacts with TDRD12. In terms of tissue distribution, testis and ovary specific. Present in germ-line cells and is most abundant in fetal prospermatogonia and postnatal primary spermatocytes (at protein level).

Its subcellular location is the cytoplasm. Functionally, plays a central role during spermatogenesis by participating in the repression transposable elements and preventing their mobilization, which is essential for the germline integrity. Acts via the piRNA metabolic process, which mediates the repression of transposable elements during meiosis by forming complexes composed of piRNAs and Piwi proteins and governs the methylation and subsequent repression of transposons. Required for the localization of Piwi proteins to the meiotic nuage. Involved in the piRNA metabolic process by ensuring the entry of correct transcripts into the normal piRNA pool and limiting the entry of cellular transcripts into the piRNA pathway. May act by allowing the recruitment of piRNA biogenesis or loading factors that ensure the correct entry of transcripts and piRNAs into Piwi proteins. The chain is Tudor domain-containing protein 1 (Tdrd1) from Mus musculus (Mouse).